Reading from the N-terminus, the 64-residue chain is Large ribosomal subunit protein bL35 (64 aa).

The interval 1–22 (MPKAKTHSGASKRFRRTGTGKI) is disordered.

This sequence belongs to the bacterial ribosomal protein bL35 family.

The chain is Large ribosomal subunit protein bL35 from Mycobacterium tuberculosis (strain ATCC 25177 / H37Ra).